We begin with the raw amino-acid sequence, 313 residues long: Tyrosine recombinase XerD (313 aa).

One can recognise a Core-binding (CB) domain in the interval Glu-17–Tyr-102. The Tyr recombinase domain maps to Arg-123–Gln-307. Residues Arg-163, Lys-187, His-259, Arg-262, and His-285 contribute to the active site. The active-site O-(3'-phospho-DNA)-tyrosine intermediate is Tyr-294.

The protein belongs to the 'phage' integrase family. XerD subfamily. As to quaternary structure, forms a cyclic heterotetrameric complex composed of two molecules of XerC and two molecules of XerD, in which XerC interacts with XerD via its C-terminal region, XerD interacts with XerC via its C-terminal region and so on.

It localises to the cytoplasm. With respect to regulation, ftsK may regulate the catalytic switch between XerC and XerD in the heterotetrameric complex during the two steps of the recombination process. In terms of biological role, site-specific tyrosine recombinase, which acts by catalyzing the cutting and rejoining of the recombining DNA molecules. Binds cooperatively to specific DNA consensus sequences that are separated from XerC binding sites by a short central region, forming the heterotetrameric XerC-XerD complex that recombines DNA substrates. The complex is essential to convert dimers of the bacterial chromosome into monomers to permit their segregation at cell division. It also contributes to the segregational stability of plasmids. In the complex XerD specifically exchanges the bottom DNA strands. This is Tyrosine recombinase XerD from Proteus mirabilis.